We begin with the raw amino-acid sequence, 181 residues long: CASP-like protein 5A1 (181 aa).

The Cytoplasmic segment spans residues 1-38 (MFASRPVVHPLEVAAPAHPVQQPAPGVLMKDLPGMPGT). Residues 39 to 59 (PGGLGLRVLQLLFAAISLAVM) form a helical membrane-spanning segment. Topologically, residues 60 to 77 (SSTADFASVSAFCYLITT) are extracellular. The chain crosses the membrane as a helical span at residues 78–98 (TVLQCVWSLTVAIVDIYALLV). At 99–115 (KRCLQNRRAVTLFSIGD) the chain is on the cytoplasmic side. A helical membrane pass occupies residues 116–136 (GITWLVSFSGACAAAGIPVLI). Residues 137 to 153 (DADLIMCSENPCASFQT) lie on the Extracellular side of the membrane. Residues 154-174 (AVAMGFMCCFSLLPSFLLNFY) form a helical membrane-spanning segment. Residues 175-181 (SIASSHG) lie on the Cytoplasmic side of the membrane.

This sequence belongs to the Casparian strip membrane proteins (CASP) family. As to quaternary structure, homodimer and heterodimers.

Its subcellular location is the cell membrane. The chain is CASP-like protein 5A1 from Zea mays (Maize).